A 406-amino-acid chain; its full sequence is 4-hydroxy-3-methylbut-2-enyl diphosphate reductase (406 aa).

Cys-66 is a [4Fe-4S] cluster binding site. His-96 lines the (2E)-4-hydroxy-3-methylbut-2-enyl diphosphate pocket. Dimethylallyl diphosphate is bound at residue His-96. Position 96 (His-96) interacts with isopentenyl diphosphate. Residue Cys-157 coordinates [4Fe-4S] cluster. (2E)-4-hydroxy-3-methylbut-2-enyl diphosphate is bound at residue His-185. His-185 lines the dimethylallyl diphosphate pocket. Residue His-185 coordinates isopentenyl diphosphate. The active-site Proton donor is Glu-187. Thr-250 serves as a coordination point for (2E)-4-hydroxy-3-methylbut-2-enyl diphosphate. Residue Cys-288 coordinates [4Fe-4S] cluster. 4 residues coordinate (2E)-4-hydroxy-3-methylbut-2-enyl diphosphate: Ser-317, Ser-318, Asn-319, and Ser-379. The dimethylallyl diphosphate site is built by Ser-317, Ser-318, Asn-319, and Ser-379. Ser-317, Ser-318, Asn-319, and Ser-379 together coordinate isopentenyl diphosphate.

Belongs to the IspH family. [4Fe-4S] cluster serves as cofactor.

The enzyme catalyses isopentenyl diphosphate + 2 oxidized [2Fe-2S]-[ferredoxin] + H2O = (2E)-4-hydroxy-3-methylbut-2-enyl diphosphate + 2 reduced [2Fe-2S]-[ferredoxin] + 2 H(+). The catalysed reaction is dimethylallyl diphosphate + 2 oxidized [2Fe-2S]-[ferredoxin] + H2O = (2E)-4-hydroxy-3-methylbut-2-enyl diphosphate + 2 reduced [2Fe-2S]-[ferredoxin] + 2 H(+). Its pathway is isoprenoid biosynthesis; dimethylallyl diphosphate biosynthesis; dimethylallyl diphosphate from (2E)-4-hydroxy-3-methylbutenyl diphosphate: step 1/1. The protein operates within isoprenoid biosynthesis; isopentenyl diphosphate biosynthesis via DXP pathway; isopentenyl diphosphate from 1-deoxy-D-xylulose 5-phosphate: step 6/6. In terms of biological role, catalyzes the conversion of 1-hydroxy-2-methyl-2-(E)-butenyl 4-diphosphate (HMBPP) into a mixture of isopentenyl diphosphate (IPP) and dimethylallyl diphosphate (DMAPP). Acts in the terminal step of the DOXP/MEP pathway for isoprenoid precursor biosynthesis. The protein is 4-hydroxy-3-methylbut-2-enyl diphosphate reductase of Synechococcus sp. (strain RCC307).